Reading from the N-terminus, the 93-residue chain is Sec-independent protein translocase protein TatA (93 aa).

Residues 1–21 traverse the membrane as a helical segment; that stretch reads MGAMSPWHWAIVALVVVILFG. The segment at 44-93 is disordered; sequence KEMQNDNSTPAPTAQQSAPAELPVADTTTAPVTPPAPVQPQPQHTEPKSA. Residues 51–74 show a composition bias toward low complexity; the sequence is STPAPTAQQSAPAELPVADTTTAP.

This sequence belongs to the TatA/E family. In terms of assembly, the Tat system comprises two distinct complexes: a TatABC complex, containing multiple copies of TatA, TatB and TatC subunits, and a separate TatA complex, containing only TatA subunits. Substrates initially bind to the TatABC complex, which probably triggers association of the separate TatA complex to form the active translocon.

Its subcellular location is the cell membrane. Functionally, part of the twin-arginine translocation (Tat) system that transports large folded proteins containing a characteristic twin-arginine motif in their signal peptide across membranes. TatA could form the protein-conducting channel of the Tat system. The protein is Sec-independent protein translocase protein TatA of Rhodococcus opacus (strain B4).